Consider the following 509-residue polypeptide: Probable cytochrome P450 4ac1 (509 aa).

The heme site is built by glutamate 317 and cysteine 454.

Belongs to the cytochrome P450 family. Requires heme as cofactor.

The protein resides in the endoplasmic reticulum membrane. Its subcellular location is the microsome membrane. Its function is as follows. May be involved in the metabolism of insect hormones and in the breakdown of synthetic insecticides. The protein is Probable cytochrome P450 4ac1 (Cyp4ac1) of Drosophila melanogaster (Fruit fly).